The following is a 224-amino-acid chain: MKRTKNINQEMFRKEWRTHRLAPVALAVSAVFFLAGCEQTDETVSLYQNADDCSSANPSMAAQCTTAYNNALKEAEKTAPKYATKEDCVAEFGEAQCTQTPAPAQAGMAAESQQGGGMSWMPLMAGYMMGRMMGGGAGFAQQPLFSPKTPASPANGQFVDASGKNYGNATTGRTMTVPKTALAPKPATTSTITRGGFGETVAKQNSMQRSSASSSSSSSRSMGG.

The segment at 178–224 (PKTALAPKPATTSTITRGGFGETVAKQNSMQRSSASSSSSSSRSMGG) is disordered. Over residues 209–224 (RSSASSSSSSSRSMGG) the composition is skewed to low complexity.

This sequence belongs to the UPF0441 family.

This chain is UPF0441 protein PC1_0312, found in Pectobacterium carotovorum subsp. carotovorum (strain PC1).